The sequence spans 551 residues: RCC1 and BTB domain-containing protein 2 (551 aa).

RCC1 repeat units follow at residues 64 to 115, 117 to 169, 171 to 222, 223 to 274, 276 to 326, and 328 to 382; these read NDEI…VLAT, EGEV…VLTS, GEVF…AVVD, TGEV…VLTD, GQVY…AAKT, and GGHV…TVAE. Residues 394-457 form the BTB domain; it reads ADLKFLVDGK…LYTDSISLSP (64 aa).

It is found in the cytoplasmic vesicle. It localises to the secretory vesicle. The protein resides in the acrosome. This chain is RCC1 and BTB domain-containing protein 2 (RCBTB2), found in Homo sapiens (Human).